The primary structure comprises 546 residues: Chaperonin GroEL (546 aa).

Residues Thr30 to Pro33, Lys51, Asp87 to Thr91, Gly415, and Asp496 each bind ATP. The interval Pro526–Met546 is disordered. Positions Gly534–Met546 are enriched in gly residues.

This sequence belongs to the chaperonin (HSP60) family. Forms a cylinder of 14 subunits composed of two heptameric rings stacked back-to-back. Interacts with the co-chaperonin GroES.

It is found in the cytoplasm. It catalyses the reaction ATP + H2O + a folded polypeptide = ADP + phosphate + an unfolded polypeptide.. Together with its co-chaperonin GroES, plays an essential role in assisting protein folding. The GroEL-GroES system forms a nano-cage that allows encapsulation of the non-native substrate proteins and provides a physical environment optimized to promote and accelerate protein folding. The protein is Chaperonin GroEL of Rhodopseudomonas palustris.